A 350-amino-acid chain; its full sequence is Probable poly-beta-1,6-N-acetyl-D-glucosamine export protein (350 aa).

Helical transmembrane passes span 8–28 (LVYLRAIICAIIIITHLLTQI), 40–60 (LVLQFYIRNIVIFGTPCFIIL), 83–103 (YILIPYILMGLFYSYSESLLT), 119–139 (QWYGYFIVVIMQFFILSYIIF), 146–166 (FNSKILLLLSFILQQSFLYYF), 182–202 (LSENTIIFGWIFYFFLGAYMG), 216–236 (LVIMIVLAVATYFVFIALANG), 254–274 (IMFIVILGICTHFKTMLFNTI), 276–296 (MISAFSFFIYLLHPIILDSLF), and 308–328 (VFLAISLLFILGLCIGVGMIL).

The protein belongs to the acyltransferase 3 family.

The protein localises to the cell membrane. Presumably involved in the export of the biofilm adhesin polysaccharide poly-beta-1,6-N-acetyl-D-glucosamine (PNAG, also referred to as PIA) across the cell membrane. The protein is Probable poly-beta-1,6-N-acetyl-D-glucosamine export protein (icaC) of Staphylococcus aureus (strain NCTC 8325 / PS 47).